A 160-amino-acid chain; its full sequence is MAKSKNHTTHNQSRKWHRNGIKKPRSQRYESLKGVDPKFLRNMRFAKKHNKKGLKKMQANNAKAVSARAEAIKALVKPQAIKPKMPKGPKLKRLAFIAHPKLGKRIRSYMAKGQRLCQPKPKVQTKAGAKAPAKAQASAPAQAPKGAQAPKGAQAPVKAP.

A compositionally biased stretch (basic residues) spans 1–26 (MAKSKNHTTHNQSRKWHRNGIKKPRS). Disordered regions lie at residues 1–34 (MAKS…SLKG) and 115–160 (RLCQ…VKAP). An N6-methyllysine modification is found at Lys5. At Ser31 the chain carries Phosphoserine. Lys33 carries the N6-acetyllysine modification. Positions 126–160 (KAGAKAPAKAQASAPAQAPKGAQAPKGAQAPVKAP) are enriched in low complexity. 2 repeat units span residues 127 to 134 (AGAKAPAK) and 135 to 142 (AQASAPAQ). Residues 127 to 142 (AGAKAPAKAQASAPAQ) are 2 X 8 AA tandem repeats of A-X-A-K-A-P-A-[KQ]. At Ser138 the chain carries Phosphoserine. Position 145 is an N6-acetyllysine (Lys145).

Belongs to the eukaryotic ribosomal protein eL29 family. As to quaternary structure, component of the large ribosomal subunit.

Its subcellular location is the cytoplasm. Its function is as follows. Component of the large ribosomal subunit. The ribosome is a large ribonucleoprotein complex responsible for the synthesis of proteins in the cell. This Mus musculus (Mouse) protein is Large ribosomal subunit protein eL29 (Rpl29).